Here is a 310-residue protein sequence, read N- to C-terminus: ADP-L-glycero-D-manno-heptose-6-epimerase (310 aa).

NADP(+)-binding positions include 10-11 (FI), 31-32 (DN), Lys-38, Lys-53, 75-79 (EGACS), and Asn-92. The active-site Proton acceptor is the Tyr-140. Position 144 (Lys-144) interacts with NADP(+). Residue Asn-169 coordinates substrate. NADP(+)-binding residues include Val-170 and Lys-178. Residue Lys-178 is the Proton acceptor of the active site. Residues Ser-180, His-187, 201–204 (FSGS), Arg-209, and Tyr-272 contribute to the substrate site.

This sequence belongs to the NAD(P)-dependent epimerase/dehydratase family. HldD subfamily. As to quaternary structure, homopentamer. It depends on NADP(+) as a cofactor.

It catalyses the reaction ADP-D-glycero-beta-D-manno-heptose = ADP-L-glycero-beta-D-manno-heptose. Its pathway is nucleotide-sugar biosynthesis; ADP-L-glycero-beta-D-manno-heptose biosynthesis; ADP-L-glycero-beta-D-manno-heptose from D-glycero-beta-D-manno-heptose 7-phosphate: step 4/4. Functionally, catalyzes the interconversion between ADP-D-glycero-beta-D-manno-heptose and ADP-L-glycero-beta-D-manno-heptose via an epimerization at carbon 6 of the heptose. This Pectobacterium atrosepticum (strain SCRI 1043 / ATCC BAA-672) (Erwinia carotovora subsp. atroseptica) protein is ADP-L-glycero-D-manno-heptose-6-epimerase.